The chain runs to 2108 residues: Mucin-5B (2108 aa).

The first 21 residues, 1 to 21, serve as a signal peptide directing secretion; that stretch reads MEIKKERSFWIFCLIWSFCKG. Positions 36–203 constitute a VWFD 1 domain; the sequence is SECTTWGNFH…KVEDPSEKCP (168 aa). 2 disulfide bridges follow: cysteine 38-cysteine 166 and cysteine 60-cysteine 202. Positions 196–219 are disordered; sequence EDPSEKCPDVRPDDHTGRHPTEDD. The TIL 1 domain maps to 304 to 360; that stretch reads CPSNMEYMECGNSCADTCADPERSKICKAPCTDGCFCPPGTILDDLGGKKCVPRDSC. The N-linked (GlcNAc...) (complex) asparagine glycan is linked to asparagine 381. Positions 398–570 constitute a VWFD 2 domain; the sequence is GSCSIDGGFH…NSWKTRASCF (173 aa). 3 disulfide bridges follow: cysteine 400–cysteine 534, cysteine 422–cysteine 569, and cysteine 443–cysteine 451. Asparagine 528, asparagine 599, asparagine 680, and asparagine 772 each carry an N-linked (GlcNAc...) (complex) asparagine glycan. Positions 666–723 constitute a TIL 2 domain; it reads CPETMVYNYSVKYCNQSCRSLDEPDPLCKVQIAPMEGCGCPEGTYLNDEEECVTPDDC. One can recognise a TIL 3 domain in the interval 782-825; it reads GSECQKSCKTQDMHCYVTECVSGCMCPDGLVLDGSGGCIPKDQC. In terms of domain architecture, VWFC 1 spans 825–897; the sequence is CPCVHGGHFY…DYILAQDFCP (73 aa). N-linked (GlcNAc...) (complex) asparagine glycosylation occurs at asparagine 855. The VWFD 3 domain maps to 863-1033; that stretch reads GTCTVYGNGH…NSWKITSTCS (171 aa). 4 cysteine pairs are disulfide-bonded: cysteine 865–cysteine 997, cysteine 887–cysteine 1032, cysteine 896–cysteine 994, and cysteine 914–cysteine 921. Residues asparagine 1036, asparagine 1219, asparagine 1371, and asparagine 1452 are each glycosylated (N-linked (GlcNAc...) (complex) asparagine). Positions 1429 to 1613 constitute a VWFD 4 domain; that stretch reads CICSGWGNEH…APVSTNRYCN (185 aa). 3 disulfides stabilise this stretch: cysteine 1431-cysteine 1573, cysteine 1453-cysteine 1612, and cysteine 1477-cysteine 1485. 5 N-linked (GlcNAc...) (complex) asparagine glycosylation sites follow: asparagine 1567, asparagine 1639, asparagine 1792, asparagine 1807, and asparagine 1841. Positions 1761–1832 constitute a VWFC 2 domain; that stretch reads CGCTAQDGSV…DPCCTETVCE (72 aa). The VWFC 3 domain occupies 1870–1937; sequence GVCVSEGVEF…KEGQCCSQCQ (68 aa). N-linked (GlcNAc...) (complex) asparagine glycosylation occurs at asparagine 1964. 4 disulfides stabilise this stretch: cysteine 2010/cysteine 2066, cysteine 2031/cysteine 2080, cysteine 2042/cysteine 2096, and cysteine 2046/cysteine 2098. Positions 2010–2104 constitute a CTCK domain; that stretch reads CIDLPHKCKR…ECGCVETKCP (95 aa).

In terms of assembly, homomultimer; disulfide-linked. The N- and C-terminus mediate their assembly into higher order structures to form filaments. The CTCK domains of two polypeptides associate in the endoplasmic reticulum to generate intermolecularly disulfide-bonded dimers. These dimers progress to the Golgi apparatus, which is a more acidic environment than the endoplasmic reticulum. Under acidic conditions, the N-termini form non-covalent intermolecular interactions that juxtapose assemblies from different CTCK-linked dimers to produce long, disulfide-linked polymers that remain highly compact until secretion. N-glycosylated. Complex glycosylation with bisecting N-acetylglucosamine. Contains mainly N-acetylglucosamine (3.1-8.5%), mannose (2.9-4.6%), a small amount of galactose (1.1-4.35) and sialic acid (0.3-1.3%). Most abundant glycan is composed of a GlcNAc(2)Man(3) core, a bisecting GlcNAc and another 3 GlcNAc antannae located on the mannoses of the core. Site Asn-1639 exists both in glycosylated and non-glycosylated forms.

The protein resides in the secreted. Functionally, ovomucin, the glycoprotein responsible for the gel properties of egg white, is composed for 2 subunits, alpha-ovomucin/MUC5B and beta-ovomucin/MUC6. This chain is Mucin-5B (MUC5B), found in Gallus gallus (Chicken).